Reading from the N-terminus, the 583-residue chain is Scarecrow-like protein 30 (583 aa).

2 disordered regions span residues 107 to 154 (GDLE…RKSK) and 182 to 205 (EATEKKTRHVKGSSNRYKQQKSDQ). The span at 115 to 124 (GNFSSITSLH) shows a compositional bias: polar residues. Residues 131–140 (ESTRRYRHRD) are compositionally biased toward basic and acidic residues. The GRAS domain maps to 200–579 (QQKSDQPVDM…RVLYAVSCWK (380 aa)). A leucine repeat I (LRI) region spans residues 207–266 (VDMRNLLMQCAQAVASFDQRRAFEKLKEIREHSSRHGDATQRLGYHFAEALEARITGTMT). Positions 285–350 (YKGFVQACPT…IGPPLLRVTG (66 aa)) are VHIID. The VHIID signature appears at 316-320 (LHIID). The leucine repeat II (LRII) stretch occupies residues 366-398 (ETGRRLKRFCDKFNVPFEYSFIAKNWENITLDD). The tract at residues 407–501 (TVVNCILRLQ…RELIIRDAMS (95 aa)) is PFYRE. Positions 504 to 579 (ACEGSERFAR…RVLYAVSCWK (76 aa)) are SAW.

This sequence belongs to the GRAS family. In terms of assembly, interacts with SNRNP35 and CYP95. In terms of tissue distribution, expressed in seedlings, leaves, sepals, stamen and pistil, and in the quiescent center of root meristem.

The protein resides in the nucleus. Functionally, probable transcription factor involved in plant development. The sequence is that of Scarecrow-like protein 30 (SCL30) from Arabidopsis thaliana (Mouse-ear cress).